Reading from the N-terminus, the 623-residue chain is Set1/Ash2 histone methyltransferase complex subunit ASH2 (623 aa).

Gly residues predominate over residues 1–18; it reads MAAAGAGPGPGVSAGPGP. The PHD-type; atypical zinc finger occupies 1-62; the sequence is MAAAGAGPGP…SGEAESGDAN (62 aa). The tract at residues 1 to 99 is disordered; it reads MAAAGAGPGP…MDTQAGSVDE (99 aa). Residues 36–56 show a composition bias toward low complexity; the sequence is AAGAGEGPSAAPGAEPSSGEA. The tract at residues 63–172 is DNA-binding; that stretch reads LVDVSGLETE…MCLSALANLT (110 aa). Over residues 84-95 the composition is skewed to polar residues; the sequence is GDTSEVMDTQAG. Ser96 bears the Phosphoserine mark. The C4-type zinc finger occupies 112–145; the sequence is CGICTKWFTADTFGIDTSSCLPFMTNYSFHCNVC. A compositionally biased stretch (basic and acidic residues) spans 230-247; that stretch reads LVKEHPDPGSKDPEEDYP. The disordered stretch occupies residues 230–326; it reads LVKEHPDPGS…AQRLPPHGYP (97 aa). Over residues 265–277 the composition is skewed to polar residues; the sequence is NQKQSSAVSASGN. Over residues 278–290 the composition is skewed to gly residues; it reads LNGGIAAGSSGKG. Arg291 is modified (asymmetric dimethylarginine; by PRMT1 and PRMT5). Position 311 is a phosphoserine (Ser311). Positions 311 to 623 are interaction with RBBP5; sequence SDPLFSAQRL…DGRRSPPWEP (313 aa). The 224-residue stretch at 355–578 folds into the B30.2/SPRY domain; sequence LDCWAGKPIP…VSINFGPSFK (224 aa).

In terms of assembly, interacts with HCFC1. Core component of several methyltransferase-containing complexes including MLL1/MLL, MLL2/3 (also named ASCOM complex) and MLL4/WBP7. Each complex is at least composed of ASH2L, RBBP5, WDR5, DPY30, one or more specific histone methyltransferases (KMT2A/MLL1, KMT2D/MLL2, KMT2C/MLL3 and KMT2B/MLL4), and the facultative components PAGR1, BACC1, CHD8, E2F6, HCFC1, HCFC2, HSP70, INO80C, KDM6A, KANSL1, LAS1L, MAX, MCRS1, MEN1, MGA, KAT8/MOF, NCOA6, PAXIP1/PTIP, PELP1, PHF20, PRP31, RING2, RUVB1/TIP49A, RUVB2/TIP49B, SENP3, TAF1, TAF4, TAF6, TAF7, TAF9, TEX10 and alpha- and beta-tubulin. Component of the SET1 complex, at least composed of the catalytic subunit (SETD1A or SETD1B), WDR5, WDR82, RBBP5, ASH2L/ASH2, CXXC1/CFP1, HCFC1 and DPY30. Found in a complex with RBBP5, ASH2L, DPY30, KMT2A, KMT2D and WDR5. Component of a histone methylation complex composed of at least ZNF335, RBBP5, ASH2L and WDR5; the complex may have histone H3-specific methyltransferase activity, however does not have specificity for 'Lys-4' of histone H3. Within the complex, interacts with ZNF335. Interacts with RBBP5. Components of this complex may associate with components of a nuclear receptor-mediated transcription complex to form a complex at least composed of ZNF335, HCFC1, CCAR2, EMSY, MKI67, RBBP5, ASH2L and WDR5. Within this complex also interacts with CCAR2 and EMSY. Interacts with DPY30. Interacts with SETD1A and SETD1B. In terms of processing, both monomethylated and dimethylated on arginine residues in the C-terminus. Arg-291 is the major site. Methylation is not required for nuclear localization, nor for MLL complex integrity or maintenance of global histone H3K4me3 levels. Ubiquitously expressed, with abundant expression in the heart, skeletal muscle and kidney. Low expression is seen in spleen, lung and testis.

It localises to the nucleus. In terms of biological role, transcriptional regulator. Component or associated component of some histone methyltransferase complexes which regulates transcription through recruitment of those complexes to gene promoters. Component of the Set1/Ash2 histone methyltransferase (HMT) complex, a complex that specifically methylates 'Lys-4' of histone H3, but not if the neighboring 'Lys-9' residue is already methylated. As part of the MLL1/MLL complex it is involved in methylation and dimethylation at 'Lys-4' of histone H3. May play a role in hematopoiesis. In association with RBBP5 and WDR5, stimulates the histone methyltransferase activities of KMT2A, KMT2B, KMT2C, KMT2D, SETD1A and SETD1B. This is Set1/Ash2 histone methyltransferase complex subunit ASH2 (Ash2l) from Mus musculus (Mouse).